Consider the following 343-residue polypeptide: MTTDTTGRTGNPAATASPDRFRYGFLKGNPQLTKNGELKHLLSIEGLPRSIVNHILDTAEQFVSVTDREVKKVPLLRGKSVFNLFFENSTRTRTTFEIAATRLSADVLNLNINASSTSKGESLLDTINNLSAMHADLFVVRHASSGAPYLIAEHCAPHVHVINAGDGRHAHPTQGLLDMYTIRHYKRDFTKLRVAIVGDILHSRVARSDIHALTTLGVPEVRAIGPRTLLPGGLEQMGVKVFHNLDEGLKGVDVIIMLRLQNERMSGALLPSAQEYFKTWGLTPERLALAAPDAIVMHPGPMNRGVEIDSQVADGPQSVILNQVTFGIAVRMAVMGIVAGNSD.

Over residues 1 to 14 (MTTDTTGRTGNPAA) the composition is skewed to polar residues. Residues 1-20 (MTTDTTGRTGNPAATASPDR) form a disordered region. 2 residues coordinate carbamoyl phosphate: Arg-91 and Thr-92. Lys-119 serves as a coordination point for L-aspartate. Residues Arg-141, His-171, and Gln-174 each contribute to the carbamoyl phosphate site. 2 residues coordinate L-aspartate: Arg-204 and Arg-259. Carbamoyl phosphate contacts are provided by Gly-300 and Pro-301.

It belongs to the aspartate/ornithine carbamoyltransferase superfamily. ATCase family. Heterododecamer (2C3:3R2) of six catalytic PyrB chains organized as two trimers (C3), and six regulatory PyrI chains organized as three dimers (R2).

It carries out the reaction carbamoyl phosphate + L-aspartate = N-carbamoyl-L-aspartate + phosphate + H(+). Its pathway is pyrimidine metabolism; UMP biosynthesis via de novo pathway; (S)-dihydroorotate from bicarbonate: step 2/3. In terms of biological role, catalyzes the condensation of carbamoyl phosphate and aspartate to form carbamoyl aspartate and inorganic phosphate, the committed step in the de novo pyrimidine nucleotide biosynthesis pathway. In Burkholderia lata (strain ATCC 17760 / DSM 23089 / LMG 22485 / NCIMB 9086 / R18194 / 383), this protein is Aspartate carbamoyltransferase catalytic subunit.